The following is a 383-amino-acid chain: 1-deoxy-D-xylulose 5-phosphate reductoisomerase (383 aa).

The NADPH site is built by Thr10, Gly11, Ser12, Ile13, Asn38, and Asn121. Lys122 is a binding site for 1-deoxy-D-xylulose 5-phosphate. Glu123 is an NADPH binding site. Mn(2+) is bound at residue Asp147. 1-deoxy-D-xylulose 5-phosphate is bound by residues Ser148, Glu149, Ser172, and His195. Glu149 serves as a coordination point for Mn(2+). Gly201 is an NADPH binding site. 1-deoxy-D-xylulose 5-phosphate-binding residues include Ser208, Asn213, Lys214, and Glu217. Residue Glu217 coordinates Mn(2+).

This sequence belongs to the DXR family. It depends on Mg(2+) as a cofactor. Requires Mn(2+) as cofactor.

It carries out the reaction 2-C-methyl-D-erythritol 4-phosphate + NADP(+) = 1-deoxy-D-xylulose 5-phosphate + NADPH + H(+). The protein operates within isoprenoid biosynthesis; isopentenyl diphosphate biosynthesis via DXP pathway; isopentenyl diphosphate from 1-deoxy-D-xylulose 5-phosphate: step 1/6. Catalyzes the NADPH-dependent rearrangement and reduction of 1-deoxy-D-xylulose-5-phosphate (DXP) to 2-C-methyl-D-erythritol 4-phosphate (MEP). The sequence is that of 1-deoxy-D-xylulose 5-phosphate reductoisomerase from Ruthia magnifica subsp. Calyptogena magnifica.